Reading from the N-terminus, the 92-residue chain is Small ribosomal subunit protein uS19 (92 aa).

Belongs to the universal ribosomal protein uS19 family.

Functionally, protein S19 forms a complex with S13 that binds strongly to the 16S ribosomal RNA. In Lachnoclostridium phytofermentans (strain ATCC 700394 / DSM 18823 / ISDg) (Clostridium phytofermentans), this protein is Small ribosomal subunit protein uS19.